An 86-amino-acid chain; its full sequence is U15-lycotoxin-Ls1d (86 aa).

The N-terminal stretch at 1–20 is a signal peptide; it reads MNSKIFAVLLLLALLSCVLS. The WAP domain maps to 21-66; the sequence is DQYCPKSSITACKKMNIRNDCCKDDDCTGGSWCCATPCGNFCKYPT. Cystine bridges form between cysteine 24–cysteine 54, cysteine 32–cysteine 58, cysteine 41–cysteine 53, cysteine 42–cysteine 80, and cysteine 47–cysteine 62.

Belongs to the venom protein 11 family. 01 (wap-1) subfamily. Post-translationally, contains 5 disulfide bonds. As to expression, expressed by the venom gland.

It localises to the secreted. Its function is as follows. Has antibacterial activity. This is U15-lycotoxin-Ls1d from Lycosa singoriensis (Wolf spider).